Reading from the N-terminus, the 274-residue chain is 4-hydroxy-3-methylbut-2-enyl diphosphate reductase (274 aa).

Residue Cys-12 participates in [4Fe-4S] cluster binding. 2 residues coordinate (2E)-4-hydroxy-3-methylbut-2-enyl diphosphate: His-36 and His-70. Positions 36 and 70 each coordinate dimethylallyl diphosphate. Residues His-36 and His-70 each coordinate isopentenyl diphosphate. Cys-92 is a [4Fe-4S] cluster binding site. His-120 serves as a coordination point for (2E)-4-hydroxy-3-methylbut-2-enyl diphosphate. His-120 is a binding site for dimethylallyl diphosphate. His-120 contributes to the isopentenyl diphosphate binding site. Glu-122 functions as the Proton donor in the catalytic mechanism. Thr-158 is a binding site for (2E)-4-hydroxy-3-methylbut-2-enyl diphosphate. Position 186 (Cys-186) interacts with [4Fe-4S] cluster. (2E)-4-hydroxy-3-methylbut-2-enyl diphosphate is bound by residues Ser-214, Ser-215, Asn-216, and Ser-258. Positions 214, 215, 216, and 258 each coordinate dimethylallyl diphosphate. Isopentenyl diphosphate contacts are provided by Ser-214, Ser-215, Asn-216, and Ser-258.

The protein belongs to the IspH family. [4Fe-4S] cluster serves as cofactor.

It carries out the reaction isopentenyl diphosphate + 2 oxidized [2Fe-2S]-[ferredoxin] + H2O = (2E)-4-hydroxy-3-methylbut-2-enyl diphosphate + 2 reduced [2Fe-2S]-[ferredoxin] + 2 H(+). It catalyses the reaction dimethylallyl diphosphate + 2 oxidized [2Fe-2S]-[ferredoxin] + H2O = (2E)-4-hydroxy-3-methylbut-2-enyl diphosphate + 2 reduced [2Fe-2S]-[ferredoxin] + 2 H(+). It functions in the pathway isoprenoid biosynthesis; dimethylallyl diphosphate biosynthesis; dimethylallyl diphosphate from (2E)-4-hydroxy-3-methylbutenyl diphosphate: step 1/1. The protein operates within isoprenoid biosynthesis; isopentenyl diphosphate biosynthesis via DXP pathway; isopentenyl diphosphate from 1-deoxy-D-xylulose 5-phosphate: step 6/6. Catalyzes the conversion of 1-hydroxy-2-methyl-2-(E)-butenyl 4-diphosphate (HMBPP) into a mixture of isopentenyl diphosphate (IPP) and dimethylallyl diphosphate (DMAPP). Acts in the terminal step of the DOXP/MEP pathway for isoprenoid precursor biosynthesis. The protein is 4-hydroxy-3-methylbut-2-enyl diphosphate reductase of Campylobacter concisus (strain 13826).